Reading from the N-terminus, the 884-residue chain is Lon protease homolog 2, peroxisomal (884 aa).

The Lon N-terminal domain maps to 12 to 255; it reads LAILPFRNKV…KATELVDRHL (244 aa). The segment at 67–101 is disordered; that stretch reads SLLSPGVGSDSGEGGSKAPGGSAGESTKQDTKNGK. Positions 75-89 are enriched in gly residues; that stretch reads SDSGEGGSKAPGGSA. Position 408-415 (408-415) interacts with ATP; that stretch reads GPPGVGKT. Residues 689–874 enclose the Lon proteolytic domain; the sequence is VASPGVSVGL…EEVLDHAFEG (186 aa). Active-site residues include serine 780 and lysine 823. The Microbody targeting signal signature appears at 882 to 884; that stretch reads SKL.

It belongs to the peptidase S16 family.

It localises to the peroxisome matrix. It carries out the reaction Hydrolysis of proteins in presence of ATP.. Its function is as follows. ATP-dependent serine protease that mediates the selective degradation of misfolded and unassembled polypeptides in the peroxisomal matrix. Necessary for type 2 peroxisome targeting signal (PTS2)-containing protein processing and facilitates peroxisome matrix protein import. In Oryza sativa subsp. japonica (Rice), this protein is Lon protease homolog 2, peroxisomal.